The following is a 281-amino-acid chain: NADPH-dependent 7-cyano-7-deazaguanine reductase (281 aa).

88–90 lines the substrate pocket; the sequence is IES. 90 to 91 contributes to the NADPH binding site; sequence SK. Cys-189 (thioimide intermediate) is an active-site residue. Catalysis depends on Asp-196, which acts as the Proton donor. 228 to 229 lines the substrate pocket; that stretch reads HE. NADPH is bound at residue 257–258; sequence RG.

This sequence belongs to the GTP cyclohydrolase I family. QueF type 2 subfamily. As to quaternary structure, homodimer.

Its subcellular location is the cytoplasm. It carries out the reaction 7-aminomethyl-7-carbaguanine + 2 NADP(+) = 7-cyano-7-deazaguanine + 2 NADPH + 3 H(+). It functions in the pathway tRNA modification; tRNA-queuosine biosynthesis. Functionally, catalyzes the NADPH-dependent reduction of 7-cyano-7-deazaguanine (preQ0) to 7-aminomethyl-7-deazaguanine (preQ1). This Yersinia enterocolitica serotype O:8 / biotype 1B (strain NCTC 13174 / 8081) protein is NADPH-dependent 7-cyano-7-deazaguanine reductase.